Consider the following 384-residue polypeptide: S-adenosylmethionine synthase (384 aa).

His15 is an ATP binding site. Asp17 contacts Mg(2+). Glu43 is a K(+) binding site. 2 residues coordinate L-methionine: Glu56 and Gln99. The tract at residues 99–109 (QSPDINQGVDR) is flexible loop. ATP-binding positions include 164–166 (DAK), 230–231 (RF), Asp239, 245–246 (RK), Ala262, and Lys266. Asp239 serves as a coordination point for L-methionine. Position 270 (Lys270) interacts with L-methionine.

The protein belongs to the AdoMet synthase family. In terms of assembly, homotetramer; dimer of dimers. Mg(2+) serves as cofactor. The cofactor is K(+).

Its subcellular location is the cytoplasm. The enzyme catalyses L-methionine + ATP + H2O = S-adenosyl-L-methionine + phosphate + diphosphate. It participates in amino-acid biosynthesis; S-adenosyl-L-methionine biosynthesis; S-adenosyl-L-methionine from L-methionine: step 1/1. Its function is as follows. Catalyzes the formation of S-adenosylmethionine (AdoMet) from methionine and ATP. The overall synthetic reaction is composed of two sequential steps, AdoMet formation and the subsequent tripolyphosphate hydrolysis which occurs prior to release of AdoMet from the enzyme. This Yersinia enterocolitica serotype O:8 / biotype 1B (strain NCTC 13174 / 8081) protein is S-adenosylmethionine synthase.